A 258-amino-acid chain; its full sequence is UPF0246 protein YaaA (258 aa).

Belongs to the UPF0246 family.

The protein is UPF0246 protein YaaA of Escherichia coli (strain SMS-3-5 / SECEC).